The chain runs to 240 residues: Protein RoBo-1 (240 aa).

The N-terminal stretch at 1–26 is a signal peptide; it reads MSWFLVLKCLLTVCIISHLSVSSTES. Asn42 carries N-linked (GlcNAc...) asparagine glycosylation. Cystine bridges form between Cys47-Cys76, Cys81-Cys102, Cys103-Cys108, Cys127-Cys151, and Cys144-Cys171. Asn153 carries an N-linked (GlcNAc...) asparagine glycan.

Belongs to the CNF-like-inhibitor family. N-glycosylated. In terms of tissue distribution, expressed abundantly in bone, including the lengthening growth plate where cartilage is remodeled into bone.

The protein resides in the secreted. In terms of biological role, may play a novel role in the growth or remodeling of bone. In Rattus norvegicus (Rat), this protein is Protein RoBo-1.